A 227-amino-acid chain; its full sequence is MKKAILATKIGMTQIFNADGVLVPVTVLEAGPCVVTQIKTVENDGYSAVQVGFGDKKEKVVEKDANGKKSVAHRHGVNKAQMGHFKKAGVSGKRFVREFKFENADEYNLADEIKADIFAEGDKVDVTAISKGKGFQGAIKRLGQHRGPMAHGSKFHRHQGSNGACSSPSKVFKGKGMPGHMGSVKVTTQNLEVVRVDADKNLLLIKGAVPGAKKALITVKETTKSGK.

The segment at 146-167 is disordered; it reads RGPMAHGSKFHRHQGSNGACSS.

The protein belongs to the universal ribosomal protein uL3 family. As to quaternary structure, part of the 50S ribosomal subunit. Forms a cluster with proteins L14 and L19.

Its function is as follows. One of the primary rRNA binding proteins, it binds directly near the 3'-end of the 23S rRNA, where it nucleates assembly of the 50S subunit. In Agathobacter rectalis (strain ATCC 33656 / DSM 3377 / JCM 17463 / KCTC 5835 / VPI 0990) (Eubacterium rectale), this protein is Large ribosomal subunit protein uL3.